The chain runs to 553 residues: Zinc finger protein Elbow (553 aa).

2 disordered regions span residues Ser59–Pro243 and Gly388–Ser407. Low complexity-rich tracts occupy residues Ser96–Val110 and Ser121–Pro134. Polar residues-rich tracts occupy residues Pro137–Thr146, Thr153–Thr173, and Thr224–Glu236. The interval Ser287 to Ala480 is self-association. The segment at Ser287–Pro553 is interaction with noc. A compositionally biased stretch (gly residues) spans Gly388–Gly406. The segment at Tyr437 to His466 adopts a C2H2-type zinc-finger fold.

Belongs to the Elbow/Noc family. Self-associates. Interacts with gro and noc.

Functionally, may negatively regulate Notch-induced cell proliferation in the eye-head primordium. May act in leg and wing primordia to negatively regulate body-wall specifying genes and thereby promote appendage formation. Required for tracheal development. The sequence is that of Zinc finger protein Elbow (elB) from Drosophila melanogaster (Fruit fly).